The primary structure comprises 453 residues: Tyrosine-protein phosphatase non-receptor type 18 (453 aa).

Positions 26–291 (LAREFSDIKA…RFLYHTVAQL (266 aa)) constitute a Tyrosine-protein phosphatase domain. Residues Asp197, 229–235 (CSAGCGR), and Gln276 each bind substrate. Cys229 acts as the Phosphocysteine intermediate in catalysis. 2 positions are modified to phosphotyrosine: Tyr381 and Tyr419. The disordered stretch occupies residues 384–453 (VAPRAQRPVA…RDPPAEWTRV (70 aa)). Over residues 442 to 453 (GPRDPPAEWTRV) the composition is skewed to basic and acidic residues.

This sequence belongs to the protein-tyrosine phosphatase family. Non-receptor class 4 subfamily. Interacts with PSTPIP1. As to expression, highest expression in bone marrow. Also expressed in kidney, lung, ovary, spleen, thymus and lymph node.

The protein localises to the nucleus. Its subcellular location is the cytoplasm. It carries out the reaction O-phospho-L-tyrosyl-[protein] + H2O = L-tyrosyl-[protein] + phosphate. Its function is as follows. May be involved in growth and differentiation of hematopoietic cells. In Mus musculus (Mouse), this protein is Tyrosine-protein phosphatase non-receptor type 18 (Ptpn18).